Consider the following 1709-residue polypeptide: Protein SHORTAGE IN CHIASMATA 1 homolog (1709 aa).

3 stretches are compositionally biased toward basic and acidic residues: residues 532–542, 552–568, and 1601–1613; these read PKLQDEDKHSD, DPQK…EGGT, and ESFR…DTPS. Disordered stretches follow at residues 532–586 and 1566–1662; these read PKLQ…SSFP and KRKA…DPTW.

The protein belongs to the XPF family. As to quaternary structure, interacts (via C-terminus) with PTD. Interacts with ZIP4. Highly expressed in anthers and pistil during meiosis. Expressed in pollen mother cells (PMCs) during meiosis. Expressed at low levels in roots, shoots, leaves, flowers, and glumes.

Its subcellular location is the chromosome. The protein resides in the nucleus. The protein localises to the cytoplasm. It is found in the cell membrane. Functionally, essential for normal crossover (CO) formation during meiosis. Essential component for the formation of class I meiotic COs. Interacts with PTD, another meiotic component, to regulate CO formation, possibly by stabilizing the recombination intermediates during meiosis. SHOC1 and PTD may form transient heterotrimeric or heterotetrameric complexes with HEI10 and/or ZIP4 to promote class I COs formation. Does not seem to be involved in early meiotic recombination steps involving double-strand break (DSB) formation, processing, and single-strand invasion. Does not seem to be involved in homologous pairing or synaptonemal complex (SC) assembly. The chain is Protein SHORTAGE IN CHIASMATA 1 homolog from Oryza sativa subsp. japonica (Rice).